Consider the following 181-residue polypeptide: Large ribosomal subunit protein uL5 (181 aa).

This sequence belongs to the universal ribosomal protein uL5 family. As to quaternary structure, part of the 50S ribosomal subunit; contacts the 5S rRNA and probably tRNA. Forms a bridge to the 30S subunit in the 70S ribosome.

Its function is as follows. This is one of the proteins that bind and probably mediate the attachment of the 5S RNA into the large ribosomal subunit, where it forms part of the central protuberance. In the 70S ribosome it contacts protein S13 of the 30S subunit (bridge B1b), connecting the 2 subunits; this bridge is implicated in subunit movement. May contact the P site tRNA; the 5S rRNA and some of its associated proteins might help stabilize positioning of ribosome-bound tRNAs. In Methanococcus maripaludis (strain C6 / ATCC BAA-1332), this protein is Large ribosomal subunit protein uL5.